Here is a 170-residue protein sequence, read N- to C-terminus: Protein BofC (170 aa).

A signal peptide spans 1–30; sequence MKRFSTAYLLLGILCSAAVFLIGAPSRALG.

In terms of assembly, monomer.

It is found in the forespore intermembrane space. In terms of biological role, inhibits the SpoIVB zymogen from undergoing autocatalytic activation by an unknown mechanism, and in this way plays a role in the sigma-K checkpoint of sporulation. The polypeptide is Protein BofC (bofC) (Bacillus subtilis (strain 168)).